The sequence spans 307 residues: Pseudouridine-5'-phosphate glycosidase (307 aa).

E28 serves as the catalytic Proton donor. Substrate-binding residues include K89 and V109. D141 provides a ligand contact to Mn(2+). Residue 143–145 (SAD) participates in substrate binding. K162 functions as the Nucleophile in the catalytic mechanism.

This sequence belongs to the pseudouridine-5'-phosphate glycosidase family. In terms of assembly, homotrimer. Mn(2+) serves as cofactor.

It carries out the reaction D-ribose 5-phosphate + uracil = psi-UMP + H2O. Functionally, catalyzes the reversible cleavage of pseudouridine 5'-phosphate (PsiMP) to ribose 5-phosphate and uracil. Functions biologically in the cleavage direction, as part of a pseudouridine degradation pathway. The polypeptide is Pseudouridine-5'-phosphate glycosidase (Nocardioides sp. (strain ATCC BAA-499 / JS614)).